The sequence spans 379 residues: Fimbrium subunit Fim1C (379 aa).

Residues 1–17 form the signal peptide; that stretch reads MEVKSLLMVMATLTIAG. Residue C18 is the site of N-palmitoyl cysteine attachment. C18 carries the S-diacylglycerol cysteine lipid modification. Residues 18–45 constitute a propeptide that is removed on maturation; that stretch reads CSQNEMTEMNPDTNRTIGLDVYTEVQTR.

This sequence belongs to the bacteroidetes fimbrillin superfamily. Mfa-like family. In terms of assembly, may be part of the fimbrial tip.

It localises to the fimbrium. It is found in the cell outer membrane. Its function is as follows. Probably a component of the fimbrium tip. Fimbriae are filamentous appendages on the cell surface that mediate cell adhesion and biofilm formation. The sequence is that of Fimbrium subunit Fim1C (fim1C) from Phocaeicola vulgatus (strain ATCC 8482 / DSM 1447 / JCM 5826 / CCUG 4940 / NBRC 14291 / NCTC 11154) (Bacteroides vulgatus).